Reading from the N-terminus, the 266-residue chain is F-actin-capping protein subunit alpha (266 aa).

Belongs to the F-actin-capping protein alpha subunit family. Heterodimer of an alpha and a beta subunit.

It is found in the cytoplasm. Its subcellular location is the cytoskeleton. In terms of biological role, F-actin-capping proteins bind in a Ca(2+)-independent manner to the fast growing ends of actin filaments (barbed end) thereby blocking the exchange of subunits at these ends. Unlike other capping proteins (such as gelsolin and severin), these proteins do not sever actin filaments. The sequence is that of F-actin-capping protein subunit alpha (CAP1) from Debaryomyces hansenii (strain ATCC 36239 / CBS 767 / BCRC 21394 / JCM 1990 / NBRC 0083 / IGC 2968) (Yeast).